Reading from the N-terminus, the 661-residue chain is Pseudouridylate synthase 7 homolog (661 aa).

M1 is modified (N-acetylmethionine). The interval 1–97 is disordered; it reads MEMTEMTGVS…GLSEECEEEE (97 aa). Position 10 is a phosphoserine (S10). A compositionally biased stretch (polar residues) spans 36–52; the sequence is SECSLTKGQDGLQNDFL. Over residues 77-97 the composition is skewed to acidic residues; sequence QLEDEEEEEEDGLSEECEEEE. A Phosphoserine modification is found at S127. The active-site Nucleophile is the D294. Residues 370–580 form the TRUD domain; it reads GFINYYGMQR…SGAYRKIIIR (211 aa). T610 carries the phosphothreonine modification.

Belongs to the pseudouridine synthase TruD family. As to quaternary structure, interacts with SIRT1.

The protein resides in the nucleus. It carries out the reaction a uridine in tRNA = a pseudouridine in tRNA. It catalyses the reaction uridine(13) in tRNA = pseudouridine(13) in tRNA. The enzyme catalyses a uridine in mRNA = a pseudouridine in mRNA. Pseudouridylate synthase that catalyzes pseudouridylation of RNAs. Acts as a regulator of protein synthesis in embryonic stem cells by mediating pseudouridylation of RNA fragments derived from tRNAs (tRFs): pseudouridylated tRFs inhibit translation by targeting the translation initiation complex. Also catalyzes pseudouridylation of mRNAs: mediates pseudouridylation of mRNAs with the consensus sequence 5'-UGUAG-3'. Acts as a regulator of pre-mRNA splicing by mediating pseudouridylation of pre-mRNAs at locations associated with alternatively spliced regions. Pseudouridylation of pre-mRNAs near splice sites directly regulates mRNA splicing and mRNA 3'-end processing. In addition to mRNAs and tRNAs, binds other types of RNAs, such as snRNAs, Y RNAs and vault RNAs, suggesting that it can catalyze pseudouridylation of many RNA types. The sequence is that of Pseudouridylate synthase 7 homolog from Homo sapiens (Human).